A 419-amino-acid polypeptide reads, in one-letter code: Phospho-N-acetylmuramoyl-pentapeptide-transferase (419 aa).

10 consecutive transmembrane segments (helical) span residues Y22–G42, T72–A92, L94–F114, I135–V155, A210–A230, G238–S258, F266–I286, F303–I323, L327–V347, and K396–L416.

It belongs to the glycosyltransferase 4 family. MraY subfamily. The cofactor is Mg(2+).

It is found in the cell inner membrane. It catalyses the reaction UDP-N-acetyl-alpha-D-muramoyl-L-alanyl-gamma-D-glutamyl-meso-2,6-diaminopimeloyl-D-alanyl-D-alanine + di-trans,octa-cis-undecaprenyl phosphate = di-trans,octa-cis-undecaprenyl diphospho-N-acetyl-alpha-D-muramoyl-L-alanyl-D-glutamyl-meso-2,6-diaminopimeloyl-D-alanyl-D-alanine + UMP. Its pathway is cell wall biogenesis; peptidoglycan biosynthesis. Catalyzes the initial step of the lipid cycle reactions in the biosynthesis of the cell wall peptidoglycan: transfers peptidoglycan precursor phospho-MurNAc-pentapeptide from UDP-MurNAc-pentapeptide onto the lipid carrier undecaprenyl phosphate, yielding undecaprenyl-pyrophosphoryl-MurNAc-pentapeptide, known as lipid I. This chain is Phospho-N-acetylmuramoyl-pentapeptide-transferase, found in Parabacteroides distasonis (strain ATCC 8503 / DSM 20701 / CIP 104284 / JCM 5825 / NCTC 11152).